An 86-amino-acid chain; its full sequence is Small ribosomal subunit protein bS18 (86 aa).

This sequence belongs to the bacterial ribosomal protein bS18 family. Part of the 30S ribosomal subunit. Forms a tight heterodimer with protein bS6.

Its function is as follows. Binds as a heterodimer with protein bS6 to the central domain of the 16S rRNA, where it helps stabilize the platform of the 30S subunit. The polypeptide is Small ribosomal subunit protein bS18 (Heliobacterium modesticaldum (strain ATCC 51547 / Ice1)).